A 261-amino-acid polypeptide reads, in one-letter code: Kallikrein 1-related peptidase b21 (261 aa).

Residues 1–17 (MRFLILFLALSLGEIDA) form the signal peptide. A propeptide spans 18 to 24 (APPVQSR) (activation peptide). The region spanning 25 to 258 (IVGGFNCEKN…FTSWIKDTMA (234 aa)) is the Peptidase S1 domain. Intrachain disulfides connect Cys31–Cys173, Cys50–Cys66, Cys152–Cys219, Cys184–Cys198, and Cys209–Cys234. His65 acts as the Charge relay system in catalysis. Asn102 is a glycosylation site (N-linked (GlcNAc...) asparagine). Asp120 functions as the Charge relay system in the catalytic mechanism. The active-site Charge relay system is Ser213.

Belongs to the peptidase S1 family. Kallikrein subfamily. In terms of tissue distribution, expressed in testis and submaxillary gland. In the testis, expression localized specifically to Leydig cells in the interstitial tissues.

It catalyses the reaction Preferential cleavage of Arg-|-Xaa bonds in small molecule substrates. Highly selective action to release kallidin (lysyl-bradykinin) from kininogen involves hydrolysis of Met-|-Xaa or Leu-|-Xaa.. Inhibited by protease inhibitors diisopropylfluorophosphate, leupeptin, antipain, benzamidine, phenylmethylsulfonyl fluoride and soybean trypsin inhibitor. In terms of biological role, glandular kallikreins cleave Met-Lys and Arg-Ser bonds in kininogen to release Lys-bradykinin. Displays trypsin-like substrate specificity and shows activity towards casein, gelatin, fibronectin and IGFBP3. This chain is Kallikrein 1-related peptidase b21 (Klk1b21), found in Mus musculus (Mouse).